Reading from the N-terminus, the 172-residue chain is Type VI secretion system sheath protein TssB1 (172 aa).

Forms a heterodimer with TssC1. Heterodimers assemble to form the sheath of the T6SS machinery. Interacts with TagJ. Interacts with TssA1.

In terms of biological role, core component of the H1 type VI (H1-T6SS) secretion system that plays a role in the release of toxins targeting both eukaryotic and prokaryotic species. Forms the sheath of the structure by assembling into tubules together with TssC1 resulting in the stacking of cogwheel-like structures showing predominantly a 12-fold symmetry. The sheath contracts to provide the energy needed for effector delivery. The chain is Type VI secretion system sheath protein TssB1 from Pseudomonas aeruginosa (strain ATCC 15692 / DSM 22644 / CIP 104116 / JCM 14847 / LMG 12228 / 1C / PRS 101 / PAO1).